Reading from the N-terminus, the 770-residue chain is MEEKYSSQALAGGGVLGPVDVPSARLTRYIVLLCFAKFLKAVGLFESYDLLKAVHLVQFIFIVKLGSAFFMVLFQKPFSSGKVVTKHQWIKIFKHAVVGCIISLLWFFGLTLCGPLRTLLLFEHSDVVVLSLLSVLFTSSGGGPAKTRGAAFFIIAVICLLLFDNDDLMAKIAEHPEGHHDSALTHVLYTVIAFLGVADHKGGVLLLVLALCCKVGFHMASRKLSVDVGGAKRLQALSHLVSVLLLCPWVIVLSLTTESKVESWSSLIMPFITVIFFVVILDFYVESICSVKMESSKCARYGSFLIFISALLFGNFWTHPITDQLRAMNKPAHHESTEHVLSGGVVVSAVFFILSANILSSPSRKGQKGTLIGYSPEGTPLYNFMGDAIQQSSQSLPRFIKESLKQILEEYDSRQIFYFLCLNLAFTFVELFYGVWTNSLGLISDGFHMLFDCSALVMGLFAALMTRWKATRIFSYGYGRVEILSGFINGLFLMVIAFFVFMESVARLVDPPDIDTNMLTPVSVGGLIVNLVGICAFSHAHSHGASRGGCHSHEHSHSYHGHSHSHGHGHSHNDHGHSHGHSHVSSGGGMNTNMRGVFLHVLADTLGSVGVIVSTTFIQQFGWLIADPLCSLFIATLIFLSVIPLLKDACQVLLLRIPPEQEKDLHAALEKIQKIDGVISYRDPHFWCHSASVVAGTIHVQVVSDVMEQRIVQQVTAILKDAGVNNLTVQVEKEAYFQHMSGLSTGFQDVLAMTQHLESMKYYKDGTYIM.

The Cytoplasmic portion of the chain corresponds to 1-29 (MEEKYSSQALAGGGVLGPVDVPSARLTRY). A helical membrane pass occupies residues 30-50 (IVLLCFAKFLKAVGLFESYDL). The Lumenal segment spans residues 51 to 53 (LKA). Residues 54–74 (VHLVQFIFIVKLGSAFFMVLF) form a helical membrane-spanning segment. The Cytoplasmic portion of the chain corresponds to 75-95 (QKPFSSGKVVTKHQWIKIFKH). The chain crosses the membrane as a helical span at residues 96–116 (AVVGCIISLLWFFGLTLCGPL). A topological domain (lumenal) is located at residue Arg-117. Residues 118-138 (TLLLFEHSDVVVLSLLSVLFT) traverse the membrane as a helical segment. Topologically, residues 139–149 (SSGGGPAKTRG) are cytoplasmic. The chain crosses the membrane as a helical span at residues 150 to 170 (AAFFIIAVICLLLFDNDDLMA). Over 171–190 (KIAEHPEGHHDSALTHVLYT) the chain is Lumenal. The helical transmembrane segment at 191 to 211 (VIAFLGVADHKGGVLLLVLAL) threads the bilayer. Residues 212–235 (CCKVGFHMASRKLSVDVGGAKRLQ) are Cytoplasmic-facing. Residues 236–256 (ALSHLVSVLLLCPWVIVLSLT) traverse the membrane as a helical segment. The Lumenal portion of the chain corresponds to 257–264 (TESKVESW). The chain crosses the membrane as a helical span at residues 265-285 (SSLIMPFITVIFFVVILDFYV). Over 286 to 300 (ESICSVKMESSKCAR) the chain is Cytoplasmic. A helical membrane pass occupies residues 301–321 (YGSFLIFISALLFGNFWTHPI). At 322–339 (TDQLRAMNKPAHHESTEH) the chain is on the lumenal side. A helical transmembrane segment spans residues 340 to 360 (VLSGGVVVSAVFFILSANILS). Over 361-415 (SPSRKGQKGTLIGYSPEGTPLYNFMGDAIQQSSQSLPRFIKESLKQILEEYDSRQ) the chain is Cytoplasmic. The chain crosses the membrane as a helical span at residues 416-436 (IFYFLCLNLAFTFVELFYGVW). The Lumenal segment spans residues 437-445 (TNSLGLISD). The chain crosses the membrane as a helical span at residues 446–466 (GFHMLFDCSALVMGLFAALMT). Zn(2+)-binding residues include His-448 and Asp-452. Residues 467 to 480 (RWKATRIFSYGYGR) are Cytoplasmic-facing. Residues 481–501 (VEILSGFINGLFLMVIAFFVF) form a helical membrane-spanning segment. The Lumenal segment spans residues 502–517 (MESVARLVDPPDIDTN). Residues 518-538 (MLTPVSVGGLIVNLVGICAFS) form a helical membrane-spanning segment. The his-rich loop; required for zinc transport stretch occupies residues 539-579 (HAHSHGASRGGCHSHEHSHSYHGHSHSHGHGHSHNDHGHSH). The Cytoplasmic portion of the chain corresponds to 539–597 (HAHSHGASRGGCHSHEHSHSYHGHSHSHGHGHSHNDHGHSHGHSHVSSGGGMNTNMRGV). A disordered region spans residues 548-586 (GGCHSHEHSHSYHGHSHSHGHGHSHNDHGHSHGHSHVSS). Residues 558-570 (SYHGHSHSHGHGH) show a composition bias toward basic residues. A helical transmembrane segment spans residues 598–618 (FLHVLADTLGSVGVIVSTTFI). Positions 600 and 604 each coordinate Zn(2+). The Lumenal portion of the chain corresponds to 619 to 622 (QQFG). Residues 623 to 643 (WLIADPLCSLFIATLIFLSVI) form a helical membrane-spanning segment. Topologically, residues 644 to 770 (PLLKDACQVL…KYYKDGTYIM (127 aa)) are cytoplasmic.

It belongs to the cation diffusion facilitator (CDF) transporter (TC 2.A.4) family. SLC30A subfamily. As to quaternary structure, heterodimer with SLC30A6/ZNT6; form a functional zinc ion transmembrane transporter.

Its subcellular location is the golgi apparatus. It is found in the golgi stack membrane. The protein localises to the cytoplasmic vesicle. The protein resides in the COPII-coated vesicle membrane. It localises to the secretory vesicle membrane. Its subcellular location is the trans-Golgi network membrane. It carries out the reaction Zn(2+)(in) + 2 H(+)(out) = Zn(2+)(out) + 2 H(+)(in). In terms of biological role, together with SLC30A6 forms a functional proton-coupled zinc ion antiporter mediating zinc entry into the lumen of organelles along the secretory pathway. By contributing to zinc ion homeostasis within the early secretory pathway, regulates the activation and folding of enzymes like alkaline phosphatases and enzymes involved in phosphatidylinositol glycan anchor biosynthesis. This chain is Proton-coupled zinc antiporter SLC30A5, found in Gallus gallus (Chicken).